Reading from the N-terminus, the 274-residue chain is Orotidine 5'-phosphate decarboxylase (274 aa).

Lys95 (proton donor) is an active-site residue.

It belongs to the OMP decarboxylase family. Type 2 subfamily.

The catalysed reaction is orotidine 5'-phosphate + H(+) = UMP + CO2. The protein operates within pyrimidine metabolism; UMP biosynthesis via de novo pathway; UMP from orotate: step 2/2. In Verminephrobacter eiseniae (strain EF01-2), this protein is Orotidine 5'-phosphate decarboxylase.